The primary structure comprises 368 residues: Chaperone protein DnaJ (368 aa).

The region spanning 5 to 70 (DYYQVLGVPR…KKRKLYDTHG (66 aa)) is the J domain. The segment at 124-201 (GVERQIQIPT…CNGAGRVEDH (78 aa)) adopts a CR-type zinc-finger fold. C137, C140, C153, C156, C175, C178, C189, and C192 together coordinate Zn(2+). 4 CXXCXGXG motif repeats span residues 137–144 (CTHCHGSG), 153–160 (CGTCRGSG), 175–182 (CPHCGGRG), and 189–196 (CKVCNGAG).

Belongs to the DnaJ family. As to quaternary structure, homodimer. Zn(2+) serves as cofactor.

Its subcellular location is the cytoplasm. Its function is as follows. Participates actively in the response to hyperosmotic and heat shock by preventing the aggregation of stress-denatured proteins and by disaggregating proteins, also in an autonomous, DnaK-independent fashion. Unfolded proteins bind initially to DnaJ; upon interaction with the DnaJ-bound protein, DnaK hydrolyzes its bound ATP, resulting in the formation of a stable complex. GrpE releases ADP from DnaK; ATP binding to DnaK triggers the release of the substrate protein, thus completing the reaction cycle. Several rounds of ATP-dependent interactions between DnaJ, DnaK and GrpE are required for fully efficient folding. Also involved, together with DnaK and GrpE, in the DNA replication of plasmids through activation of initiation proteins. In Xylella fastidiosa (strain M23), this protein is Chaperone protein DnaJ.